A 425-amino-acid polypeptide reads, in one-letter code: Aromatic prenyl transferase ptmE (425 aa).

L-tryptophan-binding positions include 83 to 84 (GI) and glutamate 92. Substrate is bound by residues arginine 107, lysine 198, tyrosine 200, arginine 265, lysine 267, tyrosine 269, tyrosine 345, tyrosine 410, and tyrosine 414.

The protein belongs to the tryptophan dimethylallyltransferase family. Homodimer.

It functions in the pathway secondary metabolite biosynthesis. In terms of biological role, aromatic prenyl transferase; part of the gene cluster that mediates the biosynthesis of the indole diterpenes penitrems. The geranylgeranyl diphosphate (GGPP) synthase ptmG catalyzes the first step in penitrem biosynthesis via conversion of farnesyl pyrophosphate and isopentyl pyrophosphate into geranylgeranyl pyrophosphate (GGPP). Condensation of indole-3-glycerol phosphate with GGPP by the prenyl transferase ptmC then forms 3-geranylgeranylindole (3-GGI). Epoxidation by the FAD-dependent monooxygenase ptmM leads to a epoxidized-GGI that is substrate of the terpene cyclase ptmB for cyclization to yield paspaline. Paspaline is subsequently converted to 13-desoxypaxilline by the cytochrome P450 monooxygenase ptmP, the latter being then converted to paxilline by the cytochrome P450 monooxygenase ptmQ. Paxilline is converted to beta-paxitriol via C-10 ketoreduction by the short-chain dehydrogenase ptmH which can be monoprenylated at the C-20 by the indole diterpene prenyltransferase ptmD. A two-step elimination (acetylation and elimination) process performed by the O-acetyltransferase ptmV and ptmI leads to the production of the prenylated form of penijanthine. The FAD-linked oxidoreductase ptmO then converts the prenylated form of penijanthine into PC-M5 which is in turn transformed into PC-M4 by the aromatic dimethylallyltransferase ptmE. Five sequential oxidative transformations performed by the cytochrome P450 monooxygenases ptmK, ptmU, ptmL, ptmN and ptmJ yield the various penitrem compounds. PtmK, ptmU and ptmM are involved in the formation of the key bicyclic ring of penitrem C via the formation of the intermediates secopenitrem D and penitrem D. PtmL catalyzes the epoxidation of penitrem D and C to yield penitrem B and F, respectively. PtmJ catalyzes the last benzylic hydroxylation to convert penitrem B to prenitrem E and penitrem F to penitrem A. This is Aromatic prenyl transferase ptmE from Penicillium ochrochloron.